A 308-amino-acid polypeptide reads, in one-letter code: MATYLDFEQKIKNLQDDIESAIISGDNDAISILEKELEKEVSSVYSNISDYQKLQLARHPDRPYAMDYIESILKNPYEINGDRHFKDDKAIVCFLGKIGEQTTMIIGEEKGRGTKNKLARNFGMPSPEGYRKALRAAKLAEKFHIPILMLVDTQGAYPGLGAEERGQSEAIARNLQEFAKLKTPTIAVVIGEGGSGGALAIAVADKLAMMQYSIFSVISPEGCAAILWNDPSKIESATKALKITPIELKKCGLIDDVINEPLIGAHRDKESAAKAIESYFLKAFEEISQDDNYLNKRYQKLMNYGAFS.

Residues 36–286 form the CoA carboxyltransferase C-terminal domain; that stretch reads ELEKEVSSVY…ESYFLKAFEE (251 aa).

It belongs to the AccA family. In terms of assembly, acetyl-CoA carboxylase is a heterohexamer composed of biotin carboxyl carrier protein (AccB), biotin carboxylase (AccC) and two subunits each of ACCase subunit alpha (AccA) and ACCase subunit beta (AccD).

It is found in the cytoplasm. The enzyme catalyses N(6)-carboxybiotinyl-L-lysyl-[protein] + acetyl-CoA = N(6)-biotinyl-L-lysyl-[protein] + malonyl-CoA. Its pathway is lipid metabolism; malonyl-CoA biosynthesis; malonyl-CoA from acetyl-CoA: step 1/1. Component of the acetyl coenzyme A carboxylase (ACC) complex. First, biotin carboxylase catalyzes the carboxylation of biotin on its carrier protein (BCCP) and then the CO(2) group is transferred by the carboxyltransferase to acetyl-CoA to form malonyl-CoA. This Helicobacter hepaticus (strain ATCC 51449 / 3B1) protein is Acetyl-coenzyme A carboxylase carboxyl transferase subunit alpha.